Reading from the N-terminus, the 1030-residue chain is Teashirt homolog 2 (1030 aa).

Residues 1 to 120 (MPRRKQQAPK…THPKLPSEPH (120 aa)) form a disordered region. Residues 11 to 42 (RAAGYAQEEVLKEEEEIKEEEEEEEDSGSVAQ) are a coiled coil. Residues 21-37 (LKEEEEIKEEEEEEEDS) show a composition bias toward acidic residues. Polar residues-rich tracts occupy residues 39-49 (SVAQHQSSNDT) and 66-95 (SCQN…QVSD). A compositionally biased stretch (basic and acidic residues) spans 103 to 120 (DVSDKKANTHPKLPSEPH). K189 participates in a covalent cross-link: Glycyl lysine isopeptide (Lys-Gly) (interchain with G-Cter in SUMO2). C2H2-type zinc fingers lie at residues 216–240 (FRCR…ETGH) and 276–300 (LKCM…KTKH). Residues 240-266 (HYQDDNRKKDKLRPTSYSKPRKRAFQD) are disordered. Glycyl lysine isopeptide (Lys-Gly) (interchain with G-Cter in SUMO2) cross-links involve residues K307 and K316. Residues 328 to 348 (VNRPCSPDSTTGSLADSFSSQ) are disordered. Polar residues predominate over residues 334–348 (PDSTTGSLADSFSSQ). The C2H2-type 3; atypical zinc-finger motif lies at 381 to 405 (LKCMECGSSHDTLQQLTTHMMVTGH). K418 is covalently cross-linked (Glycyl lysine isopeptide (Lys-Gly) (interchain with G-Cter in SUMO2)). The segment covering 432 to 459 (SLSETPNSESLAPKPSSNSPSECTASTT) has biased composition (polar residues). The interval 432 to 488 (SLSETPNSESLAPKPSSNSPSECTASTTELKKESKKEKGEGIEDEQGVKSEDYEDSL) is disordered. Over residues 460-482 (ELKKESKKEKGEGIEDEQGVKSE) the composition is skewed to basic and acidic residues. Glycyl lysine isopeptide (Lys-Gly) (interchain with G-Cter in SUMO2) cross-links involve residues K462, K480, K497, and K601. Composition is skewed to basic and acidic residues over residues 608-623 (DEVV…HEEA) and 633-664 (SFSK…KPEP). 3 disordered regions span residues 608 to 687 (DEVV…LPSI), 703 to 726 (KATE…VFHK), and 759 to 784 (QPID…SPPQ). A Glycyl lysine isopeptide (Lys-Gly) (interchain with G-Cter in SUMO2) cross-link involves residue K652. Over residues 710–722 (SPSCSSPNSSTSP) the composition is skewed to low complexity. The span at 773–783 (SSQAQSCTSPP) shows a compositional bias: polar residues. Residues K796 and K816 each participate in a glycyl lysine isopeptide (Lys-Gly) (interchain with G-Cter in SUMO2) cross-link. A DNA-binding region (homeobox) is located at residues 837-907 (RKGRQSNWNP…NVKYQLRKTG (71 aa)). The C2H2-type 4 zinc-finger motif lies at 922 to 944 (FYCSDCASQFRTPSTYISHLESH). Residue K962 forms a Glycyl lysine isopeptide (Lys-Gly) (interchain with G-Cter in SUMO2) linkage. 2 disordered regions span residues 965–987 (QEIS…EDTD) and 1009–1030 (LSKT…VDEE). Over residues 968–977 (SRVSSAQRSP) the composition is skewed to polar residues. Residue S976 is modified to Phosphoserine. The segment at 990 to 1013 (FKCKLCRRTFVSKHAVKLHLSKTH) adopts a C2H2-type 5 zinc-finger fold.

The protein belongs to the teashirt C2H2-type zinc-finger protein family. Interacts (via homeobox domain) with APBB1 (via PID domain 1). Post-translationally, sumoylated.

It is found in the nucleus. In terms of biological role, probable transcriptional regulator involved in developmental processes. May act as a transcriptional repressor (Potential). This Mus musculus (Mouse) protein is Teashirt homolog 2 (Tshz2).